The chain runs to 217 residues: Enoyl-CoA-hydratase (217 aa).

The protein belongs to the enoyl-CoA hydratase/isomerase family.

The enzyme catalyses a (3S)-3-hydroxyacyl-CoA = a (2E)-enoyl-CoA + H2O. It catalyses the reaction a 4-saturated-(3S)-3-hydroxyacyl-CoA = a (3E)-enoyl-CoA + H2O. It participates in antibiotic biosynthesis; vancomycin biosynthesis. Its function is as follows. Involved in the biosynthesis of the nonproteinogenic amino acid monomer (S)-3,5-dihydroxyphenylglycine (Dpg) responsible of the production of vancomycin and teicoplanin antibiotics. Catalyzes the syn-addition of a water molecule across the double bond of a trans-2-enoyl-CoA thioester, resulting in the formation of a beta-hydroxyacyl-CoA thioester. Physiologically, DpgB could act as a dehydratase, facilitating the aromatization of the DPA-S-DgpA or DPA-S-CoA intermediate. In Amycolatopsis orientalis (Nocardia orientalis), this protein is Enoyl-CoA-hydratase (dpgB).